Here is a 376-residue protein sequence, read N- to C-terminus: Palmitoyl-[acyl-carrier-protein] 4-desaturase 2, chloroplastic (376 aa).

The transit peptide at Met1–Thr33 directs the protein to the chloroplast. Fe cation is bound by residues Glu114, Glu149, His152, Glu202, Glu235, and His238.

It belongs to the fatty acid desaturase type 2 family. In terms of assembly, homodimer. It depends on Fe(2+) as a cofactor. Preferentially expressed in the flower labellum.

It is found in the plastid. The protein resides in the chloroplast stroma. The enzyme catalyses hexadecanoyl-[ACP] + 2 reduced [2Fe-2S]-[ferredoxin] + O2 + 2 H(+) = (4Z)-hexadecenoyl-[ACP] + 2 oxidized [2Fe-2S]-[ferredoxin] + 2 H2O. It carries out the reaction octadecanoyl-[ACP] + 2 reduced [2Fe-2S]-[ferredoxin] + O2 + 2 H(+) = (9Z)-octadecenoyl-[ACP] + 2 oxidized [2Fe-2S]-[ferredoxin] + 2 H2O. Its pathway is lipid metabolism; fatty acid metabolism. Its function is as follows. Converts stearoyl-ACP to oleoyl-ACP by introduction of a cis double bond between carbons 9 and 10 of the acyl chain. Converts palmitoyl-ACP to (4Z)-hexadec-4-enoyl-ACP by introduction of a cis double bond between carbons 4 and 5 of the acyl chain. Catalyzes the desaturation of saturated fatty acid 18:0 and 16:0 to generate 18:1 (delta-9) and 16:1 (delta-4) intermediates, expected to give rise to 9-alkenes and 12-alkenes, respectively. In Ophrys arachnitiformis subsp. archipelagi (Orchid), this protein is Palmitoyl-[acyl-carrier-protein] 4-desaturase 2, chloroplastic (SAD2).